Consider the following 308-residue polypeptide: MFDPETLRTFIAVAETGSFSKAAERLCKTTATISYRIKLLEENTGVALFFRTTRSVTLTAAGEHLLCQARDWLSWLESMPSELQQVNDGVERQVNIVINNLLYNPQAVARLLAWLNERYPFTQFHISRQIYMGVWDSLLYEGFSLAIGVTGTEALANTFSLDPLGSVQWRFVMAADHPLANVEEPLTEAQLRRFPAVNIEDSARTLTKRVAWRLPGQKEIIVPDMETKIAAHLAGVGIGFLPKSLCQSMLDNQQLVSRVIPTMRPPSPLSLAWRKFGSGKAVEDIVTLFTQRRPEISGFLEIFGNPRS.

Residues 2–59 (FDPETLRTFIAVAETGSFSKAAERLCKTTATISYRIKLLEENTGVALFFRTTRSVTLT) form the HTH lysR-type domain. Positions 19–38 (FSKAAERLCKTTATISYRIK) form a DNA-binding region, H-T-H motif.

The protein belongs to the LysR transcriptional regulatory family.

Its function is as follows. Positive regulator essential for the expression of allD operon. Binds to the allD promoter. This chain is HTH-type transcriptional activator AllS (allS), found in Escherichia coli O6:K15:H31 (strain 536 / UPEC).